The chain runs to 333 residues: MHKHRKPTEADVTPESLFYQRRRVLKALGISAAALSLPLSAQADLLAWFKGSDKPKAPPGKPLTFSQPTDWKLDLPLTPEDKVTGYNNFYEFGLDKADPAANAGGLKTDGWTIKIDGDVAKPLTLDIDDLLKRFPLEERIYRFRCVEAWSMVIPWVGFELAKLIKFAEPTSNARYVAFQTLHDPEQMPGQKDRFMGGGLDYPYVEGLRMDEAMNPLALLAVGVYGKTLPPQNGAPIRLVTPWKYGFKNIKSIVHIRLTRERPPCTWNLAAPDEYGFYANVNPHVDHPRWSQATERVIGSGGLLNVERQPTLLFNGYAEQVASLYRGLNLRDNF.

A signal peptide (tat-type signal) is located at residues 1 to 43 (MHKHRKPTEADVTPESLFYQRRRVLKALGISAAALSLPLSAQA). Mo-molybdopterin is bound by residues Asn-87, 90–91 (YE), Cys-145, Thr-180, Asn-232, Arg-237, and 248–250 (NIK).

The protein belongs to the MsrP family. Heterodimer of a catalytic subunit (MsrP) and a heme-binding subunit (MsrQ). Mo-molybdopterin is required as a cofactor. Predicted to be exported by the Tat system. The position of the signal peptide cleavage has not been experimentally proven.

The protein resides in the periplasm. The enzyme catalyses L-methionyl-[protein] + a quinone + H2O = L-methionyl-(S)-S-oxide-[protein] + a quinol. It catalyses the reaction L-methionyl-[protein] + a quinone + H2O = L-methionyl-(R)-S-oxide-[protein] + a quinol. Its function is as follows. Part of the MsrPQ system that repairs oxidized periplasmic proteins containing methionine sulfoxide residues (Met-O), using respiratory chain electrons. Thus protects these proteins from oxidative-stress damage caused by reactive species of oxygen and chlorine generated by the host defense mechanisms. MsrPQ is essential for the maintenance of envelope integrity under bleach stress, rescuing a wide series of structurally unrelated periplasmic proteins from methionine oxidation. The catalytic subunit MsrP is non-stereospecific, being able to reduce both (R-) and (S-) diastereoisomers of methionine sulfoxide. This is Protein-methionine-sulfoxide reductase catalytic subunit MsrP from Pectobacterium atrosepticum (strain SCRI 1043 / ATCC BAA-672) (Erwinia carotovora subsp. atroseptica).